We begin with the raw amino-acid sequence, 429 residues long: Type II methyltransferase M.AgeI (429 aa).

In terms of domain architecture, SAM-dependent MTase C5-type spans 1–429 (MKTIDLFCGA…MAETIKVAIS (429 aa)). Residue Cys-80 is part of the active site.

The protein belongs to the class I-like SAM-binding methyltransferase superfamily. C5-methyltransferase family.

It catalyses the reaction a 2'-deoxycytidine in DNA + S-adenosyl-L-methionine = a 5-methyl-2'-deoxycytidine in DNA + S-adenosyl-L-homocysteine + H(+). Functionally, a methylase, recognizes the double-stranded sequence 5'-ACCGGT-3', methylates C-3 on both strands, and protects the DNA from cleavage by the AgeI endonuclease. This Thalassovita gelatinovora (Thalassobius gelatinovorus) protein is Type II methyltransferase M.AgeI (ageIM).